Here is a 336-residue protein sequence, read N- to C-terminus: MSRVTLSRYLIEQTRSHNTPADLRFLIEVVARACKEISHAVSKGALGGVLGSMGTENVQGEVQKKLDVMSNEILLEANEWAGNLAGMASEEMDHPYQIPGRYPKGAYLLVFDPLDGSSNIDVNVSVGTIFSVLRCPNEYLNQNDTLREEAFLQPGTTQVAAGYAIYGPQTMLMLTLGNGVKGFTLDRELGSFVLTHDNISVPESTAEFAINMSNQRHWEAPVKRYVEELLAGKEGPLGKNYNMRWIASMVADVHRILTRGGVFMYPRDAREPEKPGKLRLMYEANPMSFIIEQAGGAATNGTQRILDIKPENLHQRVAVFLGSKQEVERITGYHKE.

4 residues coordinate Mg(2+): glutamate 90, aspartate 112, leucine 114, and aspartate 115. Substrate-binding positions include 115 to 118, asparagine 211, and lysine 277; that span reads DGSS. Residue glutamate 283 coordinates Mg(2+).

The protein belongs to the FBPase class 1 family. As to quaternary structure, homotetramer. Mg(2+) serves as cofactor.

The protein resides in the cytoplasm. The enzyme catalyses beta-D-fructose 1,6-bisphosphate + H2O = beta-D-fructose 6-phosphate + phosphate. The protein operates within carbohydrate biosynthesis; gluconeogenesis. The polypeptide is Fructose-1,6-bisphosphatase class 1 (Pseudomonas paraeruginosa (strain DSM 24068 / PA7) (Pseudomonas aeruginosa (strain PA7))).